Here is a 280-residue protein sequence, read N- to C-terminus: Tryptophan synthase alpha chain (280 aa).

Catalysis depends on proton acceptor residues Glu-50 and Asp-61.

Belongs to the TrpA family. Tetramer of two alpha and two beta chains.

It catalyses the reaction (1S,2R)-1-C-(indol-3-yl)glycerol 3-phosphate + L-serine = D-glyceraldehyde 3-phosphate + L-tryptophan + H2O. Its pathway is amino-acid biosynthesis; L-tryptophan biosynthesis; L-tryptophan from chorismate: step 5/5. The alpha subunit is responsible for the aldol cleavage of indoleglycerol phosphate to indole and glyceraldehyde 3-phosphate. The sequence is that of Tryptophan synthase alpha chain from Methylorubrum extorquens (strain CM4 / NCIMB 13688) (Methylobacterium extorquens).